A 300-amino-acid polypeptide reads, in one-letter code: Acyl-CoA-binding domain-containing protein 6 (300 aa).

Over residues 1–19 the composition is skewed to low complexity; it reads MASRSPSSSPDSATGSGTD. The segment at 1 to 43 is disordered; the sequence is MASRSPSSSPDSATGSGTDPARPDTGEPLGGGSDSDSDFGLGK. Residues 60–145 form the ACB domain; the sequence is LENEFESAAD…VHALDPEGSQ (86 aa). An acyl-CoA contacts are provided by residues 87–91, Lys113, and Tyr132; that span reads YARFK. A disordered region spans residues 142–162; that stretch reads EGSQKSSERRGGEKRTGFGGP. Basic and acidic residues predominate over residues 147 to 157; it reads SSERRGGEKRT. ANK repeat units follow at residues 209–238 and 242–271; these read EGRA…DINS and EGQT…DPSI. Residues 270–300 form a disordered region; it reads SIKDQEGSLPEEVTESSAISSLLRQYTAPKG. The span at 284–293 shows a compositional bias: polar residues; it reads ESSAISSLLR.

In terms of tissue distribution, higly expressed in the central nervous system, developing eyes, otic vesicle, and trunk muscles.

Its subcellular location is the cytoplasm. It localises to the nucleus. In terms of biological role, binds long-chain acyl-coenzyme A molecules with a strong preference for unsaturated C18:1-CoA. Does not bind fatty acids. Plays a role in protein N-myristoylation. The polypeptide is Acyl-CoA-binding domain-containing protein 6 (acbd6) (Danio rerio (Zebrafish)).